The sequence spans 383 residues: Succinyl-diaminopimelate desuccinylase (383 aa).

Residue His73 coordinates Zn(2+). The active site involves Asp75. Position 107 (Asp107) interacts with Zn(2+). Catalysis depends on Glu141, which acts as the Proton acceptor. 3 residues coordinate Zn(2+): Glu142, Glu170, and His356.

The protein belongs to the peptidase M20A family. DapE subfamily. In terms of assembly, homodimer. It depends on Zn(2+) as a cofactor. Requires Co(2+) as cofactor.

It carries out the reaction N-succinyl-(2S,6S)-2,6-diaminopimelate + H2O = (2S,6S)-2,6-diaminopimelate + succinate. It participates in amino-acid biosynthesis; L-lysine biosynthesis via DAP pathway; LL-2,6-diaminopimelate from (S)-tetrahydrodipicolinate (succinylase route): step 3/3. Catalyzes the hydrolysis of N-succinyl-L,L-diaminopimelic acid (SDAP), forming succinate and LL-2,6-diaminopimelate (DAP), an intermediate involved in the bacterial biosynthesis of lysine and meso-diaminopimelic acid, an essential component of bacterial cell walls. The polypeptide is Succinyl-diaminopimelate desuccinylase (Pseudomonas fluorescens (strain ATCC BAA-477 / NRRL B-23932 / Pf-5)).